The primary structure comprises 165 residues: uncharacterized protein (165 aa).

It belongs to the SixA phosphatase family.

This is an uncharacterized protein from Picosynechococcus sp. (strain ATCC 27264 / PCC 7002 / PR-6) (Agmenellum quadruplicatum).